The sequence spans 81 residues: Acyl carrier protein (81 aa).

The Carrier domain occupies 4 to 79; that stretch reads AEIKDKVYDI…QAIDYIVNKK (76 aa). O-(pantetheine 4'-phosphoryl)serine is present on Ser-39.

This sequence belongs to the acyl carrier protein (ACP) family. In terms of processing, 4'-phosphopantetheine is transferred from CoA to a specific serine of apo-ACP by AcpS. This modification is essential for activity because fatty acids are bound in thioester linkage to the sulfhydryl of the prosthetic group.

Its subcellular location is the cytoplasm. Its pathway is lipid metabolism; fatty acid biosynthesis. Functionally, carrier of the growing fatty acid chain in fatty acid biosynthesis. The protein is Acyl carrier protein of Chlorobaculum tepidum (strain ATCC 49652 / DSM 12025 / NBRC 103806 / TLS) (Chlorobium tepidum).